The following is a 182-amino-acid chain: NADH-quinone oxidoreductase subunit I (182 aa).

4Fe-4S ferredoxin-type domains follow at residues Leu-52 to Ala-82 and Asp-92 to Asp-121. Residues Cys-62, Cys-65, Cys-68, Cys-72, Cys-101, Cys-104, Cys-107, and Cys-111 each coordinate [4Fe-4S] cluster.

It belongs to the complex I 23 kDa subunit family. In terms of assembly, NDH-1 is composed of 13 different subunits. Subunits NuoA, H, J, K, L, M, N constitute the membrane sector of the complex. [4Fe-4S] cluster is required as a cofactor.

Its subcellular location is the cell inner membrane. It carries out the reaction a quinone + NADH + 5 H(+)(in) = a quinol + NAD(+) + 4 H(+)(out). In terms of biological role, NDH-1 shuttles electrons from NADH, via FMN and iron-sulfur (Fe-S) centers, to quinones in the respiratory chain. The immediate electron acceptor for the enzyme in this species is believed to be ubiquinone. Couples the redox reaction to proton translocation (for every two electrons transferred, four hydrogen ions are translocated across the cytoplasmic membrane), and thus conserves the redox energy in a proton gradient. The chain is NADH-quinone oxidoreductase subunit I from Pseudomonas fluorescens (strain Pf0-1).